A 481-amino-acid polypeptide reads, in one-letter code: 3-isopropylmalate dehydratase large subunit (481 aa).

Cys357, Cys417, and Cys420 together coordinate [4Fe-4S] cluster.

This sequence belongs to the aconitase/IPM isomerase family. LeuC type 1 subfamily. Heterodimer of LeuC and LeuD. The cofactor is [4Fe-4S] cluster.

It catalyses the reaction (2R,3S)-3-isopropylmalate = (2S)-2-isopropylmalate. The protein operates within amino-acid biosynthesis; L-leucine biosynthesis; L-leucine from 3-methyl-2-oxobutanoate: step 2/4. Its function is as follows. Catalyzes the isomerization between 2-isopropylmalate and 3-isopropylmalate, via the formation of 2-isopropylmaleate. In Mycolicibacterium vanbaalenii (strain DSM 7251 / JCM 13017 / BCRC 16820 / KCTC 9966 / NRRL B-24157 / PYR-1) (Mycobacterium vanbaalenii), this protein is 3-isopropylmalate dehydratase large subunit.